Consider the following 1218-residue polypeptide: NACHT, LRR and PYD domains-containing protein 1a allele 3 (1218 aa).

A compositionally biased stretch (polar residues) spans 1-29 (MGESQSKQESNTRVAQHGSQQDVDPTFQT). Disordered stretches follow at residues 1 to 44 (MGES…QVEQ) and 71 to 91 (EMDH…DRSE). Over residues 77–87 (RRHSHQSKKKL) the composition is skewed to basic residues. Residues 175–484 (QLVIIEGAAG…EFFAAMSYIL (310 aa)) form the NACHT domain. Position 181 to 188 (181 to 188 (GAAGIGKS)) interacts with ATP. LRR repeat units follow at residues 343-364 (KERN…LTLC), 673-693 (NLEE…RSLC), and 730-750 (RLAE…RQLC). The segment covering 799-815 (TMPTENTDGEESLTSSK) has biased composition (polar residues). A disordered region spans residues 799–842 (TMPTENTDGEESLTSSKQQQQQSGDKHMEPLGTDDDFWGPSGPV). A ZU5 region spans residues 835–968 (FWGPSGPVST…HFAVLENPSF (134 aa)). The 284-residue stretch at 835-1118 (FWGPSGPVST…LRPALPRMAS (284 aa)) folds into the FIIND domain. The UPA stretch occupies residues 969–1118 (SPMGVLLRMI…LRPALPRMAS (150 aa)). A CARD domain is found at 1122 to 1211 (DAPALLHFVD…HLIMDLLEKS (90 aa)).

Belongs to the NLRP family. As to quaternary structure, interacts (via LRR repeats) with BCL2 and BCL2L1 (via the loop between motifs BH4 and BH3). Interacts with NOD2; this interaction is enhanced in the presence of muramyl dipeptide (MDP) and increases IL1B release. Interacts with EIF2AK2/PKR; this interaction requires EIF2AK2 activity, is accompanied by EIF2AK2 autophosphorylation and promotes inflammasome assembly in response to danger-associated signals. Interacts with MEFV; this interaction targets Nlrp1a to degradation by autophagy, hence preventing excessive IL1B- and IL18-mediated inflammation. Interacts with DPP9; leading to inhibit activation of the inflammasome. DPP9 acts via formation of a ternary complex, composed of a DPP9 homodimer, one full-length NLRP1 protein, and one cleaved C-terminus of Nlrp1a (NACHT, LRR and PYD domains-containing protein 1a, C-terminus). Interacts with DPP8; leading to inhibit activation of the inflammasome, probably via formation of a ternary complex with DPP8. In terms of assembly, interacts with the C-terminal part of Nlrp1a (NACHT, LRR and PYD domains-containing protein 1a, C-terminus) in absence of pathogens and other damage-associated signals. Interacts with the N-terminal part of Nlrp1a (NACHT, LRR and PYD domains-containing protein 1a, N-terminus) in absence of pathogens and other damage-associated signals. Homomultimer; forms the Nlrp1a inflammasome polymeric complex, a filament composed of homopolymers of this form in response to pathogens and other damage-associated signals. The Nlrp1a inflammasome polymeric complex directly recruits pro-caspase-1 (proCASP1) independently of PYCARD/ASC. Interacts (via CARD domain) with CASP1 (via CARD domain); leading to CASP1 activation. Post-translationally, autocatalytically cleaved. Autocatalytic cleavage in FIIND region occurs constitutively, prior to activation signals, and is required for inflammasome activity (IL1B release), possibly by facilitating CASP1 binding. Both N- and C-terminal parts remain associated non-covalently. Ubiquitinated in response to pathogen-associated signals, leading to its degradation by the proteasome and subsequent release of the cleaved C-terminal part of the protein (NACHT, LRR and PYD domains-containing protein 1a, C-terminus), which polymerizes and forms the Nlrp1a inflammasome.

Its subcellular location is the cytoplasm. It is found in the cytosol. It localises to the nucleus. The protein resides in the inflammasome. Activated by pathogens and other damage-associated signals: activation promotes ubiquitination and degradation of the N-terminal part, releasing the cleaved C-terminal part of the protein (NACHT, LRR and PYD domains-containing protein 1a, C-terminus), which polymerizes and forms the Nlrp1a inflammasome. Nlrp1a inflammasome is inhibited by DPP8 and DPP9, which sequester the C-terminal fragment of Nlrp1a (NACHT, LRR and PYD domains-containing protein 1a, C-terminus) in a ternary complex, thereby preventing Nlrp1a oligomerization and activation. Nlrp1a inflammasome is strongly activated by Val-boroPro (Talabostat, PT-100), an inhibitor of dipeptidyl peptidases DPP8 and DPP9. Val-boroPro relieves inhibition of DPP8 and/or DPP9 by promoting disruption of the ternary complex, releasing its C-terminal part from autoinhibition. Not activated by cleavage by B.anthracis lethal toxin (LT) endopeptidase. Functionally, acts as the sensor component of the Nlrp1a inflammasome, which mediates inflammasome activation in response to various pathogen-associated signals, leading to subsequent pyroptosis. Inflammasomes are supramolecular complexes that assemble in the cytosol in response to pathogens and other damage-associated signals and play critical roles in innate immunity and inflammation. Acts as a recognition receptor (PRR): recognizes specific pathogens and other damage-associated signals, such as Val-boroPro inhibitor, and mediates the formation of the inflammasome polymeric complex. In response to pathogen-associated signals, the N-terminal part of Nlrp1a is degraded by the proteasome, releasing the cleaved C-terminal part of the protein (NACHT, LRR and PYD domains-containing protein 1a, C-terminus), which polymerizes to initiate the formation of the inflammasome complex: the inflammasome directly recruits pro-caspase-1 (proCASP1) independently of PYCARD/ASC and promotes caspase-1 (CASP1) activation, which subsequently cleaves and activates inflammatory cytokines IL1B and IL18 and gasdermin-D (GSDMD), leading to pyroptosis. In the absence of GSDMD expression, the Nlrp1a inflammasome is able to recruit and activate CASP8, leading to activation of gasdermin-E (GSDME). Its function is as follows. Constitutes the precursor of the Nlrp1a inflammasome, which mediates autoproteolytic processing within the FIIND domain to generate the N-terminal and C-terminal parts, which are associated non-covalently in absence of pathogens and other damage-associated signals. Regulatory part that prevents formation of the Nlrp1a inflammasome: in absence of pathogens and other damage-associated signals, interacts with the C-terminal part of Nlrp1a (NACHT, LRR and PYD domains-containing protein 1a, C-terminus), preventing activation of the Nlrp1a inflammasome. In response to pathogen-associated signals, this part is ubiquitinated by the N-end rule pathway and degraded by the proteasome, releasing the cleaved C-terminal part of the protein, which polymerizes and forms the Nlrp1a inflammasome. In terms of biological role, constitutes the active part of the Nlrp1a inflammasome. In absence of pathogens and other damage-associated signals, interacts with the N-terminal part of Nlrp1a (NACHT, LRR and PYD domains-containing protein 1a, N-terminus), preventing activation of the Nlrp1a inflammasome. In response to pathogen-associated signals, the N-terminal part of Nlrp1a is degraded by the proteasome, releasing this form, which polymerizes to form the Nlrp1a inflammasome complex: the Nlrp1a inflammasome complex then directly recruits pro-caspase-1 (proCASP1) and promotes caspase-1 (CASP1) activation, leading to gasdermin-D (GSDMD) cleavage and subsequent pyroptosis. This Rattus norvegicus (Rat) protein is NACHT, LRR and PYD domains-containing protein 1a allele 3.